We begin with the raw amino-acid sequence, 379 residues long: DNA replication and repair protein RecF (379 aa).

34–41 (GDNGAGKT) serves as a coordination point for ATP.

This sequence belongs to the RecF family.

The protein resides in the cytoplasm. Its function is as follows. The RecF protein is involved in DNA metabolism; it is required for DNA replication and normal SOS inducibility. RecF binds preferentially to single-stranded, linear DNA. It also seems to bind ATP. The chain is DNA replication and repair protein RecF from Mesorhizobium japonicum (strain LMG 29417 / CECT 9101 / MAFF 303099) (Mesorhizobium loti (strain MAFF 303099)).